The sequence spans 128 residues: Transcription antitermination protein NusB (128 aa).

Belongs to the NusB family.

Its function is as follows. Involved in transcription antitermination. Required for transcription of ribosomal RNA (rRNA) genes. Binds specifically to the boxA antiterminator sequence of the ribosomal RNA (rrn) operons. The polypeptide is Transcription antitermination protein NusB (Listeria innocua serovar 6a (strain ATCC BAA-680 / CLIP 11262)).